We begin with the raw amino-acid sequence, 473 residues long: Calcium/calmodulin-dependent protein kinase type IV (473 aa).

Serine 12 and serine 13 each carry phosphoserine; by autocatalysis. Residues 46-300 form the Protein kinase domain; sequence FEVESELGRG…TFQALQHPWV (255 aa). Residues 52 to 60 and lysine 75 each bind ATP; that span reads LGRGATSIV. Residue threonine 57 is glycosylated (O-linked (GlcNAc) threonine). O-linked (GlcNAc) serine glycosylation is present at serine 58. The O-linked (GlcNAc) serine glycan is linked to serine 137. Residue aspartate 164 is the Proton acceptor of the active site. O-linked (GlcNAc) serine glycosylation occurs at serine 189. Threonine 200 is subject to Phosphothreonine; by CaMKK1 and CaMKK2. The tract at residues 305–321 is autoinhibitory domain; it reads ANFVHMDTAQKKLQEFN. Residues 306 to 323 form a PP2A-binding region; it reads NFVHMDTAQKKLQEFNAR. Residues 322-341 form a calmodulin-binding region; that stretch reads ARRKLKAAVKAVVASSRLGS. At serine 336 the chain carries Phosphoserine; by autocatalysis. Position 341 is a phosphoserine (serine 341). Low complexity predominate over residues 341 to 350; it reads SASSSHGSIQ. Disordered stretches follow at residues 341–368 and 445–473; these read SASSSHGSIQESHKASRDPSPIQDGNED and EEAAAPREGQGSSAVGFEVPQQDVILPEY. O-linked (GlcNAc) serine glycosylation is found at serine 344, serine 345, and serine 356. Serine 360 bears the Phosphoserine mark.

The protein belongs to the protein kinase superfamily. CAMK Ser/Thr protein kinase family. CaMK subfamily. Monomer. Interacts with protein phosphatase 2A (PPP2CA/PPP2CB); the interaction is mutually exclusive with binding to Ca(2+)/calmodulin. Post-translationally, phosphorylated by CaMKK1 and CaMKK2 on Thr-200. Dephosphorylated by protein phosphatase 2A. Autophosphorylated on Ser-12 and Ser-13. In terms of processing, glycosylation at Ser-189 modulates the phosphorylation of CaMK4 at Thr-200 and negatively regulates its activity toward CREB1 in basal conditions and during early inomycin stimulation. In terms of tissue distribution, expressed in brain, thymus, CD4 T-cells, testis and epithelial ovarian cancer tissue.

The protein localises to the cytoplasm. It localises to the nucleus. It carries out the reaction L-seryl-[protein] + ATP = O-phospho-L-seryl-[protein] + ADP + H(+). The catalysed reaction is L-threonyl-[protein] + ATP = O-phospho-L-threonyl-[protein] + ADP + H(+). Its activity is regulated as follows. Activated by Ca(2+)/calmodulin. Binding of calmodulin results in conformational change that relieves intrasteric autoinhibition and allows phosphorylation of Thr-200 within the activation loop by CaMKK1 or CaMKK2. Phosphorylation of Thr-200 results in a 10-20-fold increase in total activity to generate Ca(2+)/calmodulin-independent activity. Autophosphorylation of the N-terminus Ser-12 and Ser-13 is required for full activation. Inactivated by protein phosphatase 2A (PPP2CA/PPP2CB) which dephosphorylates Thr-200, thereby terminating autonomous activity and helping to maintain the enzyme in its autoinhibited state. In terms of biological role, calcium/calmodulin-dependent protein kinase that operates in the calcium-triggered CaMKK-CaMK4 signaling cascade and regulates, mainly by phosphorylation, the activity of several transcription activators, such as CREB1, MEF2D, JUN and RORA, which play pivotal roles in immune response, inflammation, and memory consolidation. In the thymus, regulates the CD4(+)/CD8(+) double positive thymocytes selection threshold during T-cell ontogeny. In CD4 memory T-cells, is required to link T-cell antigen receptor (TCR) signaling to the production of IL2, IFNG and IL4 (through the regulation of CREB and MEF2). Regulates the differentiation and survival phases of osteoclasts and dendritic cells (DCs). Mediates DCs survival by linking TLR4 and the regulation of temporal expression of BCL2. Phosphorylates the transcription activator CREB1 on 'Ser-133' in hippocampal neuron nuclei and contribute to memory consolidation and long term potentiation (LTP) in the hippocampus. Can activate the MAP kinases MAPK1/ERK2, MAPK8/JNK1 and MAPK14/p38 and stimulate transcription through the phosphorylation of ELK1 and ATF2. Can also phosphorylate in vitro CREBBP, PRM2, MEF2A and STMN1/OP18. The chain is Calcium/calmodulin-dependent protein kinase type IV (CAMK4) from Homo sapiens (Human).